The chain runs to 854 residues: Protein translocase subunit SecA (854 aa).

ATP is bound by residues Gln-89, 107–111 (GEGKT), and Asp-501.

It belongs to the SecA family. Monomer and homodimer. Part of the essential Sec protein translocation apparatus which comprises SecA, SecYEG and auxiliary proteins SecDF-YajC and YidC.

It localises to the cell inner membrane. It is found in the cytoplasm. The enzyme catalyses ATP + H2O + cellular proteinSide 1 = ADP + phosphate + cellular proteinSide 2.. Functionally, part of the Sec protein translocase complex. Interacts with the SecYEG preprotein conducting channel. Has a central role in coupling the hydrolysis of ATP to the transfer of proteins into and across the cell membrane, serving both as a receptor for the preprotein-SecB complex and as an ATP-driven molecular motor driving the stepwise translocation of polypeptide chains across the membrane. This chain is Protein translocase subunit SecA, found in Pelagibacter ubique (strain HTCC1062).